Consider the following 198-residue polypeptide: Photosystem I assembly protein Ycf4 (198 aa).

Transmembrane regions (helical) follow at residues tryptophan 35 to isoleucine 57 and isoleucine 70 to asparagine 92.

This sequence belongs to the Ycf4 family.

It is found in the plastid. Its subcellular location is the chloroplast thylakoid membrane. Its function is as follows. Seems to be required for the assembly of the photosystem I complex. This is Photosystem I assembly protein Ycf4 from Euglena gracilis.